Consider the following 150-residue polypeptide: Large ribosomal subunit protein bL9 (150 aa).

The protein belongs to the bacterial ribosomal protein bL9 family.

Functionally, binds to the 23S rRNA. The polypeptide is Large ribosomal subunit protein bL9 (Shewanella pealeana (strain ATCC 700345 / ANG-SQ1)).